The following is a 2515-amino-acid chain: MHHPFGKEEAASQKQLLGFFCECLRRGEWELAKACVPQLHEAQGDIPKKVEDILWALVLCPNQLRCGQDISPQRLAWVWLLVLEKWLALEKKLLPTGFRRKLEFLLLSEDLPSDISEDILKELYAVLAQDRVDPVLDGNLRQESWPPRLSSEAVSMLWDLLREAPQVAQALLELLLGEVDGAGLRGWPLQKALVDLIRKALRTLQGPTAAPPGTVDAIYGALRTLRCPAEPLGAELRLLCEELLEACRSEGSPLREERLLGCLLHKAGRDLVSLYSHTYAEKATPSGKVPPDPLDPERAMLALFSNPDPAHAWKVAYFYCLSNSKHFLEQILVTALTLLKEEDFPSLGCLLSREFRPLSRLLVLLGWTHCQSLASAKSLLQTLHRTQDQGCDKLLRDACDGLWAHLEVLEWCVQHSSNPIPKRDLLCHLHGGDSHSVLYSLHHLTNLPALREEDVLKLLQKVPAKDPQQEHDSADTLVPAHLSQSQSLTLYRSFCAMKYAIYALCVSSHQHSQCRQCKDGPSDDLASVAEPMNDPPSSPGASDLFSTYLARCQQYLCSIPDSLCLELLENVFSLLLITSADLHPEPHLPEDYAEDAQPERKSEQGALGTARGLAYTVPSCPKPEPKDSSPEPHGHSFLDLKHFTSSVSGFLADEFAIGAFLRLLQEQLDELSSRGPPEKPKLLEDQSGSGSRDGLQSRLHQFSKVLSEAQWRYKVVTSIQGSEEQPSRRYRPITTRHPSLRRGRRTRKSRADDQDKGSRSSLENTSSELSTSTSEGSLSAASGKNELEGRLQPQPHSSLIPMMFSPPESLLASCILRGNFAEAHQVVFTFNLKSSHGSGELMFMERYQEVIQELAQVEHKIENQNSDGGSSTIRRTGSGRSTLQAIGSAAAAGMVFYSISDVTDKLLSTSGDPIPTLQEDFWISSCPMELTAPLKEVLEDLSPPAMAAFDLACSQCQLWKTGKQLLETAERRLNSSLESQGRRLDHVFVNADGIRGFPGVLQQISKILNYPLVSAGQIKSESGEDKGGGPPRCSIAELLQMCWPSLTEDCVASHTTLSQQLEQILQSLREALELPEPRSTPLSSLVEQVAQKAPEAEAHPVYIQAQLLQKNLGKQTAAGGKQTDYMGTFFRYCSTLAAVLLRSLSSEPDHVEVKVGNPFVLLQQSSSQLVSHLLLERQVPPDRLAALLAQEGLSLSVPQVIVNCCCEPLTLCSSRQSKQTSALLTRLGTLAQLHTSRCLDDLPLSTLSCLKSTENPTLERKPPSSPRDSSPPALTSSALAFLKSRSKLLATVACLGASRGSKVTKTSLSWKELRGRREVPLTAEQVARECERLLEQFPVLEASLLAAWEPLRGSSEQGQSLASSLCGQASLSTVLLGPHSPTALDVLTEAFEEALVARDWRRALQLTDVYGQDVDDLSSIQDAVLSCAAACDKEGWQFLFAVKDACLRSQLTLQFVDRWPLEWCLEILAYCLSDTAVQDGLECELRRKLAELQVYQKILGLQSTPVWCNWQALRNCCAEDPSTVMNLILEAKEYELCEEWGCLYPIPREHLINLHQKHLLHLLERGDHEKALQQQLLQRIPDPTMCLEVTEQSLDQHPSLATSHFLANYLTTHFYGELTADRHREIQALYMGSKVLLTLPEQHRASYAHLSSSPLLMLEQLLMNMKVDWAAVAVQTLRQLLAGQEIGFTTDEVDALLSRYAGKALDFPYPLREKRSDSVIHLQEIVSQVSDLETLSRSPSAEFSSATAPGVSTVHSPSVRERNFPPSQLPLEFVPPATPPARHQWVPDESESVCMVCRRERFTMFNRRHHCRRCGRLVCSSCSTKKMVVEGCRENPTRVCDQCYSYFNQDVPEENPGQAEAPDSSKSESPPYSAVVRVPKAAEVEWILDLNEEENELVRSEFYYEQAPSASLCIAILNLHEDSVSCGHQLIEHCCRLSQGLTNPEVDAGLLTDIMKQLLFSAKMMFVKAGQSQDLALCDSYISKVDVLNILVAAAYRHVPSLDQILQPAAVTRLRNQLLEAEYYQLGVEVSTKTGLDPTGAWHAWGMACLKAGNLTAAREKFSRCLKPPFDLNQLSHGSRLVQEVVEYLESTARPLLSVQDDDFLATLKELEATLRTQSLSLEVIPEGKILNNTYYQECLFYLHSYSTHLAIISFYVRHSCLREALLHLLHTESPPEVFIEGIFQPSYKSGKLHDLENLLESIDSSLESWGKYLIAACQHLQKKNYYHILYELQQFMKDHVRAAMTCIRFFTHKAKTYTELGEKLSWLLKAKDHLKIYLQETSRRSGRKKTTFFRKKMTASDVSRHMNTLQLQMEVTRFLHRCESAGTSQVTTSPLPTLFGNNHMKMDVACKVMLGGKNVEDGFGIAFRVLQDFQLDAAATYCKAARQLVEREKFGEIRQLLKCVSESGMAAQSDRDTVLLNCVEAFRRIPPQELEGLIQAIHSDDNKVQAYLKCCKLRSAYLIAVKQEHSRAAVLVEQVQQAAKSSGDAVVQDICSQWLLTSRSRGAHGSASRK.

Disordered regions lie at residues glycine 520–glycine 540, proline 586–glycine 634, serine 672–glutamine 696, and serine 718–isoleucine 800. A compositionally biased stretch (basic and acidic residues) spans proline 623 to glycine 634. A compositionally biased stretch (basic residues) spans proline 738–lysine 748. Positions serine 749–serine 758 are enriched in basic and acidic residues. Over residues arginine 759–glycine 783 the composition is skewed to low complexity. At serine 774 the chain carries Phosphoserine. The stretch at methionine 842 to glycine 869 forms a coiled coil. The disordered stretch occupies residues threonine 1253–alanine 1273. A phosphoserine mark is found at serine 1718, serine 1740, serine 1756, and serine 1758. Residues serine 1740–arginine 1760 are disordered. An FYVE-type zinc finger spans residues aspartate 1788 to asparagine 1848. Positions 1794, 1797, 1811, 1814, 1819, 1822, 1840, and 1843 each coordinate Zn(2+).

It belongs to the ZFYVE26 family. In terms of assembly, interacts with AP5Z1, AP5B1, AP5S1 and SPG11. Interacts with TTC19 and KIF13A.

The protein localises to the cytoplasm. The protein resides in the cytoskeleton. It localises to the microtubule organizing center. Its subcellular location is the centrosome. It is found in the midbody. Functionally, phosphatidylinositol 3-phosphate-binding protein required for the abscission step in cytokinesis: recruited to the midbody during cytokinesis and acts as a regulator of abscission. May also be required for efficient homologous recombination DNA double-strand break repair. The chain is Zinc finger FYVE domain-containing protein 26 (ZFYVE26) from Bos taurus (Bovine).